A 274-amino-acid polypeptide reads, in one-letter code: Penicillin-insensitive murein endopeptidase (274 aa).

An N-terminal signal peptide occupies residues Met1–Ala19. 3 disulfides stabilise this stretch: Cys44/Cys265, Cys187/Cys235, and Cys216/Cys223. Zn(2+) is bound by residues His110, His113, Asp120, Asp147, His150, and His211. Residues Leu228–Ser264 are disordered.

It belongs to the peptidase M74 family. Dimer. The cofactor is Zn(2+).

The protein localises to the periplasm. Murein endopeptidase that cleaves the D-alanyl-meso-2,6-diamino-pimelyl amide bond that connects peptidoglycan strands. Likely plays a role in the removal of murein from the sacculus. The protein is Penicillin-insensitive murein endopeptidase of Escherichia coli (strain 55989 / EAEC).